Here is a 401-residue protein sequence, read N- to C-terminus: tRNA(Met) cytidine acetate ligase (401 aa).

ATP is bound by residues 7–20 (IVEY…HLYH), Gly-102, Asn-164, and Arg-189.

Belongs to the TmcAL family.

The protein resides in the cytoplasm. The catalysed reaction is cytidine(34) in elongator tRNA(Met) + acetate + ATP = N(4)-acetylcytidine(34) in elongator tRNA(Met) + AMP + diphosphate. In terms of biological role, catalyzes the formation of N(4)-acetylcytidine (ac(4)C) at the wobble position of elongator tRNA(Met), using acetate and ATP as substrates. First activates an acetate ion to form acetyladenylate (Ac-AMP) and then transfers the acetyl group to tRNA to form ac(4)C34. The chain is tRNA(Met) cytidine acetate ligase from Thermoanaerobacter pseudethanolicus (strain ATCC 33223 / 39E) (Clostridium thermohydrosulfuricum).